We begin with the raw amino-acid sequence, 426 residues long: MFGRNFPFFNSIGGFYPRESLDSKRPSGTGYTSKVRVRDKYHIVGFISSGTYGRVYKAIGKDGRKGEYAIKKFKPDKEGEIIQYTGLSQSAIREMALCSELDHPNVVQLAEIILEDKCIFMVFEYTEHDLLQIIHHHTQPQRHAIPAPMIKSILFQLLNGLLYLHTNWVLHRDLKPANILVTSSGAVRIGDLGLARLFYKPLNSLYSGDKVVVTIWYRAPELLMGSRHYTPAVDLWAVGCIFAELLSLRPIFKGEEAKMDSKKTVPFQRNQMMKIIDIMGLPRKETWPGLVSMPEFSQLQSLAMSRGYLNRQCNLEGWYQSCLKNNGYSPGSAAGTPGAEGFDLLSRLLEYDPTKRISAREALEHPYFTTGTPVTANCFAGYEGKYPHRRVTQDDNDIRSGSLPGTKRSGLPDDSLMGRAAKRLKE.

The 328-residue stretch at 41–368 folds into the Protein kinase domain; sequence YHIVGFISSG…AREALEHPYF (328 aa). Residues 47-55 and K71 each bind ATP; that span reads ISSGTYGRV. D173 acts as the Proton acceptor in catalysis. The disordered stretch occupies residues 390 to 426; it reads RVTQDDNDIRSGSLPGTKRSGLPDDSLMGRAAKRLKE.

Belongs to the protein kinase superfamily. CMGC Ser/Thr protein kinase family. CDC2/CDKX subfamily. In terms of assembly, component of the srb8-11 complex, a regulatory module of the Mediator complex. Mg(2+) serves as cofactor.

The protein resides in the nucleus. It catalyses the reaction L-seryl-[protein] + ATP = O-phospho-L-seryl-[protein] + ADP + H(+). The enzyme catalyses L-threonyl-[protein] + ATP = O-phospho-L-threonyl-[protein] + ADP + H(+). It carries out the reaction [DNA-directed RNA polymerase] + ATP = phospho-[DNA-directed RNA polymerase] + ADP + H(+). In terms of biological role, component of the srb8-11 complex. The srb8-11 complex is a regulatory module of the Mediator complex which is itself dependent transcription. The srb8-11 complex may be involved in the transcriptional repression of a subset of genes regulated by Mediator. It may inhibit the association of the Mediator complex with RNA polymerase II to form the holoenzyme complex. The srb8-11 complex phosphorylates the C-terminal domain (CTD) of the largest subunit of RNA polymerase II. This is Serine/threonine-protein kinase ssn3 (ssn3) from Neosartorya fischeri (strain ATCC 1020 / DSM 3700 / CBS 544.65 / FGSC A1164 / JCM 1740 / NRRL 181 / WB 181) (Aspergillus fischerianus).